The chain runs to 38 residues: Large ribosomal subunit protein bL36 (38 aa).

The protein belongs to the bacterial ribosomal protein bL36 family.

This chain is Large ribosomal subunit protein bL36, found in Chloroflexus aurantiacus (strain ATCC 29366 / DSM 635 / J-10-fl).